Reading from the N-terminus, the 543-residue chain is Chaperonin GroEL (543 aa).

ATP-binding positions include 29–32 (TLGP), 86–90 (DGTTT), Gly413, 478–480 (DAL), and Asp494. Positions 524–543 (PEPEAPAVPAGMPGGMGGMY) are disordered.

The protein belongs to the chaperonin (HSP60) family. In terms of assembly, forms a cylinder of 14 subunits composed of two heptameric rings stacked back-to-back. Interacts with the co-chaperonin GroES.

The protein localises to the cytoplasm. It catalyses the reaction ATP + H2O + a folded polypeptide = ADP + phosphate + an unfolded polypeptide.. Functionally, together with its co-chaperonin GroES, plays an essential role in assisting protein folding. The GroEL-GroES system forms a nano-cage that allows encapsulation of the non-native substrate proteins and provides a physical environment optimized to promote and accelerate protein folding. The chain is Chaperonin GroEL from Ruminiclostridium cellulolyticum (strain ATCC 35319 / DSM 5812 / JCM 6584 / H10) (Clostridium cellulolyticum).